Here is a 131-residue protein sequence, read N- to C-terminus: uncharacterized protein (131 aa).

This is an uncharacterized protein from Escherichia coli.